A 457-amino-acid chain; its full sequence is Argininosuccinate lyase (457 aa).

This sequence belongs to the lyase 1 family. Argininosuccinate lyase subfamily.

It localises to the cytoplasm. It carries out the reaction 2-(N(omega)-L-arginino)succinate = fumarate + L-arginine. Its pathway is amino-acid biosynthesis; L-arginine biosynthesis; L-arginine from L-ornithine and carbamoyl phosphate: step 3/3. This is Argininosuccinate lyase from Staphylococcus carnosus (strain TM300).